Consider the following 602-residue polypeptide: Glutamine--fructose-6-phosphate aminotransferase [isomerizing] (602 aa).

C2 (nucleophile; for GATase activity) is an active-site residue. The 216-residue stretch at C2 to D217 folds into the Glutamine amidotransferase type-2 domain. Residues I67–R87 form a disordered region. The span at K77–R87 shows a compositional bias: basic and acidic residues. SIS domains lie at I283 to N422 and V455 to P592. Residue K597 is the For Fru-6P isomerization activity of the active site.

In terms of assembly, homodimer.

It is found in the cytoplasm. It carries out the reaction D-fructose 6-phosphate + L-glutamine = D-glucosamine 6-phosphate + L-glutamate. Functionally, catalyzes the first step in hexosamine metabolism, converting fructose-6P into glucosamine-6P using glutamine as a nitrogen source. This chain is Glutamine--fructose-6-phosphate aminotransferase [isomerizing], found in Streptococcus pneumoniae (strain ATCC BAA-255 / R6).